A 417-amino-acid polypeptide reads, in one-letter code: Serine hydroxymethyltransferase (417 aa).

Residues L121 and 125 to 127 each bind (6S)-5,6,7,8-tetrahydrofolate; that span reads GHL. The residue at position 229 (K229) is an N6-(pyridoxal phosphate)lysine. 355-357 provides a ligand contact to (6S)-5,6,7,8-tetrahydrofolate; sequence SPF.

Belongs to the SHMT family. As to quaternary structure, homodimer. The cofactor is pyridoxal 5'-phosphate.

Its subcellular location is the cytoplasm. It catalyses the reaction (6R)-5,10-methylene-5,6,7,8-tetrahydrofolate + glycine + H2O = (6S)-5,6,7,8-tetrahydrofolate + L-serine. It participates in one-carbon metabolism; tetrahydrofolate interconversion. The protein operates within amino-acid biosynthesis; glycine biosynthesis; glycine from L-serine: step 1/1. Catalyzes the reversible interconversion of serine and glycine with tetrahydrofolate (THF) serving as the one-carbon carrier. This reaction serves as the major source of one-carbon groups required for the biosynthesis of purines, thymidylate, methionine, and other important biomolecules. Also exhibits THF-independent aldolase activity toward beta-hydroxyamino acids, producing glycine and aldehydes, via a retro-aldol mechanism. This chain is Serine hydroxymethyltransferase, found in Yersinia enterocolitica serotype O:8 / biotype 1B (strain NCTC 13174 / 8081).